Consider the following 328-residue polypeptide: DNA-directed RNA polymerase subunit alpha (328 aa).

An alpha N-terminal domain (alpha-NTD) region spans residues 1-232 (MHNSLAELIK…QHLAILVDLK (232 aa)). An alpha C-terminal domain (alpha-CTD) region spans residues 246-328 (FDPLLLHPVD…PPEGLKKLNQ (83 aa)).

It belongs to the RNA polymerase alpha chain family. In terms of assembly, homodimer. The RNAP catalytic core consists of 2 alpha, 1 beta, 1 beta' and 1 omega subunit. When a sigma factor is associated with the core the holoenzyme is formed, which can initiate transcription.

It catalyses the reaction RNA(n) + a ribonucleoside 5'-triphosphate = RNA(n+1) + diphosphate. Functionally, DNA-dependent RNA polymerase catalyzes the transcription of DNA into RNA using the four ribonucleoside triphosphates as substrates. In Methylococcus capsulatus (strain ATCC 33009 / NCIMB 11132 / Bath), this protein is DNA-directed RNA polymerase subunit alpha.